Reading from the N-terminus, the 744-residue chain is Prestin (744 aa).

At 1 to 79 (MDHAEENEIP…WLPAYKFKEY (79 aa)) the chain is on the cytoplasmic side. Residues 80 to 105 (VLGDLVSGISTGVLQLPQGLAFAMLA) form a helical membrane-spanning segment. Residues 106-109 (AVPP) lie on the Extracellular side of the membrane. A helical membrane pass occupies residues 110–125 (VFGLYSSFYPVIMYCF). The Cytoplasmic segment spans residues 126-137 (FGTSRHISIGPF). A helical membrane pass occupies residues 138 to 147 (AVISLMIGGV). The Extracellular segment spans residues 148–178 (AVRLVPDDIVIPGGVNATNGTEARDALRVKV). An Involved in motor function motif is present at residues 158–168 (IPGGVNATNGT). N-linked (GlcNAc...) asparagine glycosylation is found at Asn163 and Asn166. Residues 179–196 (AMSVTLLSGIIQFCLGVC) traverse the membrane as a helical segment. At 197–208 (RFGFVAIYLTEP) the chain is on the cytoplasmic side. A helical transmembrane segment spans residues 209–230 (LVRGFTTAAAVHVFTSMLKYLF). Residues 231–243 (GVKTKRYSGIFSV) are Extracellular-facing. The helical intramembrane region spans 244–252 (VYSTVAVLQ). The Extracellular portion of the chain corresponds to 253-258 (NVKNLN). Residues 259 to 282 (VCSLGVGLMVFGLLLGGKEFNERF) form a helical membrane-spanning segment. Residues 283-291 (KEKLPAPIP) lie on the Cytoplasmic side of the membrane. Residues 292–304 (LEFFAVVMGTGIS) form a helical membrane-spanning segment. The Extracellular segment spans residues 305 to 337 (AGFNLHESYSVDVVGTLPLGLLPPANPDTSLFH). The helical transmembrane segment at 338-361 (LVYVDAIAIAIVGFSVTISMAKTL) threads the bilayer. At 362–370 (ANKHGYQVD) the chain is on the cytoplasmic side. A helical membrane pass occupies residues 371 to 388 (GNQELIALGICNSIGSLF). Topologically, residues 389-396 (QTFSISCS) are extracellular. The helical transmembrane segment at 397–406 (LSRSLVQEGT) threads the bilayer. Salicylate is bound at residue Ser398. Over 407–410 (GGKT) the chain is Cytoplasmic. Residues 411-429 (QLAGCLASLMILLVILATG) traverse the membrane as a helical segment. Residues 430–436 (FLFESLP) are Extracellular-facing. The chain crosses the membrane as a helical span at residues 437–455 (QAVLSAIVIVNLKGMFMQF). Residues 456 to 469 (SDLPFFWRTSKIEL) are Cytoplasmic-facing. The chain crosses the membrane as a helical span at residues 470 to 484 (TIWLTTFVSSLFLGL). Position 485 (Asp485) is a topological domain, extracellular. A helical membrane pass occupies residues 486–497 (YGLITAVIIALL). The Cytoplasmic portion of the chain corresponds to 498–744 (TVIYRTQSPS…PNATPTTPEA (247 aa)). The extended region for STAS domain stretch occupies residues 505-718 (SPSYKVLGQL…AVLGSHVREA (214 aa)). One can recognise an STAS domain in the interval 525–713 (AYEEVKEIPG…HSIHDAVLGS (189 aa)). The tract at residues 717–744 (EAMAEQEASAPPPQDDMEPNATPTTPEA) is disordered.

It belongs to the SLC26A/SulP transporter (TC 2.A.53) family. Homodimer. Interacts (via STAS domain) with CALM; this interaction is calcium-dependent and the STAS domain interacts with only one lobe of CALM which is an elongated conformation. Interacts with MYH1. In terms of tissue distribution, highly expressed in mature outer hair cells, but not in inner hair cells or other cells of the basilar membrane and the organ of Corti.

The protein localises to the lateral cell membrane. The enzyme catalyses 2 hydrogencarbonate(in) + chloride(out) = 2 hydrogencarbonate(out) + chloride(in). Its function is as follows. Voltage-sensitive motor protein that drives outer hair cell (OHC) electromotility (eM) and participates in sound amplification in the hearing organ. Converts changes in the transmembrane electric potential into mechanical displacements resulting in the coupling of its expansion to movement of a charged voltage sensor across the lipid membrane. The nature of the voltage sensor is not completely clear, and two models compete. In the first model, acts as an incomplete transporter where intracellular chloride anion acts as extrinsic voltage sensor that drives conformational change in the protein which is sufficient to produce a length change in the plane of the membrane and hence in the length of the OHC. The second model in which multiple charged amino acid residues are distributed at the intracellular and extracellular membrane interfaces that form an intrinsic voltage sensor, whose movement produces the non-linear capacitance (NLC). However, the effective voltage sensor may be the result of a hybrid voltage sensor assembled from intrinsic charge (charged residues) and extrinsic charge (bound anion). Notably, binding of anions to the anion-binding pocket partially neutralizes the intrinsic positive charge rather than to form an electrically negative sensor, therefore remaining charge may serve as voltage sensor that, after depolarization, moves from down (expanded state) to up (contracted) conformation, which is accompanied by an eccentric contraction of the intermembrane cross-sectional area of the protein as well as a major increase in the hydrophobic thickness of the protein having as consequences the plasma membrane thickening and the cell contraction after membrane depolarization. The anion-binding pocket transits from the inward-open (Down) state, where it is exposed toward the intracellular solvent in the absence of anion, to the occluded (Up) state upon anion binding. Salicylate competes for the anion-binding site and inhibits the voltage-sensor movement, and therefore inhibits the charge transfer and electromotility by displacing Cl(-) from the anion-binding site and by preventing the structural transitions to the contracted state. In addition, can act as a weak Cl(-)/HCO3 (-) antiporter across the cell membrane and so regulate the intracellular pH of the outer hair cells (OHCs), while firstly found as being unable to mediate electrogenic anion transport. Moreover, supports a role in cardiac mechanical amplification serving as an elastic element to enhance the actomyosin- based sarcomere contraction system. The chain is Prestin from Meriones unguiculatus (Mongolian jird).